Reading from the N-terminus, the 142-residue chain is Hemoglobin subunit alpha (142 aa).

The 141-residue stretch at 2–142 (HLTADDKKHI…VSNVLTSKYR (141 aa)) folds into the Globin domain. Heme b-binding residues include H59 and H88.

It belongs to the globin family. Heterotetramer of two alpha chains and two beta chains. In terms of tissue distribution, red blood cells.

Its function is as follows. Involved in oxygen transport from the lung to the various peripheral tissues. The polypeptide is Hemoglobin subunit alpha (hba-A) (Xenopus tropicalis (Western clawed frog)).